Consider the following 198-residue polypeptide: Peptidyl-tRNA hydrolase (198 aa).

Tyr17 is a binding site for tRNA. His22 serves as the catalytic Proton acceptor. 3 residues coordinate tRNA: Tyr74, Asn76, and Asn122.

Belongs to the PTH family. As to quaternary structure, monomer.

It localises to the cytoplasm. It carries out the reaction an N-acyl-L-alpha-aminoacyl-tRNA + H2O = an N-acyl-L-amino acid + a tRNA + H(+). Functionally, hydrolyzes ribosome-free peptidyl-tRNAs (with 1 or more amino acids incorporated), which drop off the ribosome during protein synthesis, or as a result of ribosome stalling. Catalyzes the release of premature peptidyl moieties from peptidyl-tRNA molecules trapped in stalled 50S ribosomal subunits, and thus maintains levels of free tRNAs and 50S ribosomes. The protein is Peptidyl-tRNA hydrolase of Kineococcus radiotolerans (strain ATCC BAA-149 / DSM 14245 / SRS30216).